We begin with the raw amino-acid sequence, 258 residues long: Thiazole synthase (258 aa).

K97 (schiff-base intermediate with DXP) is an active-site residue. 1-deoxy-D-xylulose 5-phosphate contacts are provided by residues G158, 184–185 (AG), and 206–207 (NT).

Belongs to the ThiG family. In terms of assembly, homotetramer. Forms heterodimers with either ThiH or ThiS.

The protein resides in the cytoplasm. The catalysed reaction is [ThiS sulfur-carrier protein]-C-terminal-Gly-aminoethanethioate + 2-iminoacetate + 1-deoxy-D-xylulose 5-phosphate = [ThiS sulfur-carrier protein]-C-terminal Gly-Gly + 2-[(2R,5Z)-2-carboxy-4-methylthiazol-5(2H)-ylidene]ethyl phosphate + 2 H2O + H(+). Its pathway is cofactor biosynthesis; thiamine diphosphate biosynthesis. Functionally, catalyzes the rearrangement of 1-deoxy-D-xylulose 5-phosphate (DXP) to produce the thiazole phosphate moiety of thiamine. Sulfur is provided by the thiocarboxylate moiety of the carrier protein ThiS. In vitro, sulfur can be provided by H(2)S. The polypeptide is Thiazole synthase (Bacteroides fragilis (strain ATCC 25285 / DSM 2151 / CCUG 4856 / JCM 11019 / LMG 10263 / NCTC 9343 / Onslow / VPI 2553 / EN-2)).